The primary structure comprises 1012 residues: Structural polyprotein (1012 aa).

Residue D30 participates in a divalent metal cation binding. In terms of domain architecture, Peptidase S50 spans 513–755 (ADKGYEVVAN…AGRQYHLAMA (243 aa)). The active-site Nucleophile is the S652. K692 is an active-site residue. A disordered region spans residues 970–1012 (MEMKHRNPRRAPPKPKPKPNAPSQRPPGRLGRWIRTVSDEDLE). Basic residues predominate over residues 975-986 (RNPRRAPPKPKP). The interval 1003-1012 (IRTVSDEDLE) is interaction with VP1 protein.

As to quaternary structure, homotrimer. A central divalent metal stabilizes the VP2 trimer. Interacts with host ITGA4/ITGB1. Homodimer. Interacts (via C-terminus) with VP1 in the cytoplasm. Interacts with VP2. Post-translationally, specific enzymatic cleavages yield mature proteins. The capsid assembly seems to be regulated by polyprotein processing. The protease VP4 cleaves itself off the polyprotein, thus releasing pre-VP2 and VP3 within the infected cell. During capsid assembly, the C-terminus of pre-VP2 is further processed by VP4, giving rise to VP2, the external capsid protein and three small peptides that all stay closely associated with the capsid.

The protein resides in the virion. It is found in the host cytoplasm. Functionally, capsid protein VP2 self assembles to form an icosahedral capsid with a T=13 symmetry, about 70 nm in diameter, and consisting of 260 VP2 trimers. The capsid encapsulates the genomic dsRNA. VP2 is also involved in attachment and entry into the host cell by interacting with host ITGA4/ITGB1. In terms of biological role, the precursor of VP2 plays an important role in capsid assembly. First, pre-VP2 and VP2 oligomers assemble to form a procapsid. Then, the pre-VP2 intermediates may be processed into VP2 proteins by proteolytic cleavage mediated by VP4 to obtain the mature virion. The final capsid is composed of pentamers and hexamers but VP2 has a natural tendency to assemble into all-pentameric structures. Therefore pre-VP2 may be required to allow formation of the hexameric structures. Protease VP4 is a serine protease that cleaves the polyprotein into its final products. Pre-VP2 is first partially cleaved, and may be completely processed by VP4 upon capsid maturation. Its function is as follows. Capsid protein VP3 plays a key role in virion assembly by providing a scaffold for the capsid made of VP2. May self-assemble to form a T=4-like icosahedral inner-capsid composed of at least 180 trimers. Plays a role in genomic RNA packaging by recruiting VP1 into the capsid and interacting with the dsRNA genome segments to form a ribonucleoprotein complex. Additionally, the interaction of the VP3 C-terminal tail with VP1 removes the inherent structural blockade of the polymerase active site. Thus, VP3 can also function as a transcriptional activator. Functionally, structural peptide 1 is a small peptide derived from pre-VP2 C-terminus. It destabilizes and perforates cell membranes, suggesting a role during entry. In terms of biological role, structural peptide 2 is a small peptide derived from pVP2 C-terminus. It is not essential for the virus viability, but viral growth is affected when missing. Structural peptide 3 is a small peptide derived from pVP2 C-terminus. It is not essential for the virus viability, but viral growth is affected when missing. Its function is as follows. Structural peptide 4 is a small peptide derived from pVP2 C-terminus. It is essential for the virus viability. The chain is Structural polyprotein from Avian infectious bursal disease virus (strain Australian 002-73) (IBDV).